The primary structure comprises 785 residues: Sexual differentiation process protein isp4 (785 aa).

A disordered region spans residues 1–28 (MIGSINESPIEEHMNDSPSTKEKADSVD). Over residues 10-26 (IEEHMNDSPSTKEKADS) the composition is skewed to basic and acidic residues. Transmembrane regions (helical) follow at residues 94-114 (MWTI…FFSL), 121-141 (LSVL…DLIF), 167-187 (LIVV…IILA), 196-216 (FGFG…YGLA), 264-284 (FFLY…YIFQ), 339-359 (LMNI…ALNF), 413-433 (ALAF…VILY), 461-481 (VPFY…MGTI), 490-510 (WWVI…IGIV), 512-532 (AITN…GYMY), 537-557 (LAMM…LAFA), 572-592 (IMFY…IGVL), 611-631 (YTCP…VIGP), 642-662 (TGLQ…WALW), 683-703 (GYIP…GLFF), and 732-752 (LSVI…PDWW).

It belongs to the oligopeptide OPT transporter family.

Its subcellular location is the endoplasmic reticulum membrane. This Schizosaccharomyces pombe (strain 972 / ATCC 24843) (Fission yeast) protein is Sexual differentiation process protein isp4 (isp4).